A 478-amino-acid polypeptide reads, in one-letter code: Glutamate-1-semialdehyde 2,1-aminomutase, chloroplastic (478 aa).

An N6-(pyridoxal phosphate)lysine modification is found at Lys318.

It belongs to the class-III pyridoxal-phosphate-dependent aminotransferase family. HemL subfamily. In terms of assembly, homodimer. The cofactor is pyridoxal 5'-phosphate.

Its subcellular location is the plastid. It localises to the chloroplast. It catalyses the reaction (S)-4-amino-5-oxopentanoate = 5-aminolevulinate. It participates in porphyrin-containing compound metabolism; protoporphyrin-IX biosynthesis; 5-aminolevulinate from L-glutamyl-tRNA(Glu): step 2/2. Its pathway is porphyrin-containing compound metabolism; chlorophyll biosynthesis. The protein is Glutamate-1-semialdehyde 2,1-aminomutase, chloroplastic (GSA) of Nicotiana tabacum (Common tobacco).